Consider the following 180-residue polypeptide: MLSPLKNISLGSELKSLWTVFLHLFQPKATIQYPEERPYIPPRWRGRIILSRDPDGEERCVACNLCAVACPVDCIALQKTEDEQGRWYPEFFRINFSRCIFCGFCEEACPTYAIQLTPDFEMGEYERPNLVYEKEDLLINGTGKYPDYNFYRVAGMAIGGKTKGEAENEESPVDVRSLMP.

4Fe-4S ferredoxin-type domains lie at 50–80 (LSRD…LQKT) and 90–119 (EFFR…LTPD). Positions 60, 63, 66, 70, 99, 102, 105, and 109 each coordinate [4Fe-4S] cluster.

The protein belongs to the complex I 23 kDa subunit family. NDH-1 is composed of 14 different subunits. Subunits NuoA, H, J, K, L, M, N constitute the membrane sector of the complex. It depends on [4Fe-4S] cluster as a cofactor.

The protein resides in the cell inner membrane. The catalysed reaction is a quinone + NADH + 5 H(+)(in) = a quinol + NAD(+) + 4 H(+)(out). In terms of biological role, NDH-1 shuttles electrons from NADH, via FMN and iron-sulfur (Fe-S) centers, to quinones in the respiratory chain. The immediate electron acceptor for the enzyme in this species is believed to be ubiquinone. Couples the redox reaction to proton translocation (for every two electrons transferred, four hydrogen ions are translocated across the cytoplasmic membrane), and thus conserves the redox energy in a proton gradient. The sequence is that of NADH-quinone oxidoreductase subunit I 1 from Nitrosococcus oceani (strain ATCC 19707 / BCRC 17464 / JCM 30415 / NCIMB 11848 / C-107).